The chain runs to 126 residues: Glycine cleavage system H protein (126 aa).

Residues 23–104 (TLTVGITDHA…PYESWLFKIK (82 aa)) form the Lipoyl-binding domain. Lys64 bears the N6-lipoyllysine mark.

The protein belongs to the GcvH family. As to quaternary structure, the glycine cleavage system is composed of four proteins: P, T, L and H. (R)-lipoate serves as cofactor.

Its function is as follows. The glycine cleavage system catalyzes the degradation of glycine. The H protein shuttles the methylamine group of glycine from the P protein to the T protein. In Paraburkholderia phytofirmans (strain DSM 17436 / LMG 22146 / PsJN) (Burkholderia phytofirmans), this protein is Glycine cleavage system H protein.